The following is a 376-amino-acid chain: 23S rRNA (uracil(747)-C(5))-methyltransferase RlmC (376 aa).

Positions 3, 11, 14, and 87 each coordinate [4Fe-4S] cluster. The S-adenosyl-L-methionine site is built by Gln-212, Phe-241, Glu-262, and Asn-307. Cys-334 functions as the Nucleophile in the catalytic mechanism.

The protein belongs to the class I-like SAM-binding methyltransferase superfamily. RNA M5U methyltransferase family. RlmC subfamily.

It catalyses the reaction uridine(747) in 23S rRNA + S-adenosyl-L-methionine = 5-methyluridine(747) in 23S rRNA + S-adenosyl-L-homocysteine + H(+). Catalyzes the formation of 5-methyl-uridine at position 747 (m5U747) in 23S rRNA. The sequence is that of 23S rRNA (uracil(747)-C(5))-methyltransferase RlmC from Pectobacterium carotovorum subsp. carotovorum (strain PC1).